The primary structure comprises 531 residues: Putative aldehyde dehydrogenase family 7 member A1 homolog (531 aa).

Residue 264-269 (GSSEIG) participates in NAD(+) binding. Residue Glu286 is the Proton acceptor of the active site. The active-site Nucleophile is Cys320.

Belongs to the aldehyde dehydrogenase family. As to quaternary structure, homotetramer.

The catalysed reaction is an aldehyde + NAD(+) + H2O = a carboxylate + NADH + 2 H(+). This is Putative aldehyde dehydrogenase family 7 member A1 homolog (alh-9) from Caenorhabditis elegans.